The sequence spans 285 residues: MVKIGAHVSSSKSLDLVFDRGREIGADTIQFFLSSPRSWHWKERSDEEKELFIQKRRETGISPVIAHSSYLFNLASSDPVLRKKSINGVIRELKLCEELKIDYYVIHAGKSKGLKESEAVKNIIDSVKEIFSKVKLKHTFFLYETLAGQKGEIGKTTDELAQLMEPFKKENTGVCVDTCHIYSAGYKINDEEGFYSYRSELSKKIGLENVKVIHCNDSKTPFNSKRDRHEHIGEGSIGYKGFEFFLNDEYFRRLPFILETPKTADWDIKNMERLRRLIRTAPVAQ.

Zn(2+) contacts are provided by His-67, His-107, Glu-144, Asp-177, His-180, His-214, Asp-227, His-229, and Glu-259.

It belongs to the AP endonuclease 2 family. Requires Zn(2+) as cofactor.

It catalyses the reaction Endonucleolytic cleavage to 5'-phosphooligonucleotide end-products.. Endonuclease IV plays a role in DNA repair. It cleaves phosphodiester bonds at apurinic or apyrimidinic (AP) sites, generating a 3'-hydroxyl group and a 5'-terminal sugar phosphate. The sequence is that of Probable endonuclease 4 from Persephonella marina (strain DSM 14350 / EX-H1).